Here is a 313-residue protein sequence, read N- to C-terminus: Carbamate kinase 2 (313 aa).

Belongs to the carbamate kinase family.

Its subcellular location is the cytoplasm. It carries out the reaction hydrogencarbonate + NH4(+) + ATP = carbamoyl phosphate + ADP + H2O + H(+). It functions in the pathway metabolic intermediate metabolism; carbamoyl phosphate degradation; CO(2) and NH(3) from carbamoyl phosphate: step 1/1. The polypeptide is Carbamate kinase 2 (arcC2) (Staphylococcus aureus (strain Mu50 / ATCC 700699)).